We begin with the raw amino-acid sequence, 362 residues long: METEGLSPMLYEDDYYYGNETGLQPCDETDWDFSYSLLPVFYMIVFVLGLSGNGVVIFTVWKSKPKRRSADTYIGNLALADLAFVVTLPLWATYTALGFHWPFGSALCKLSSYLVLLNMFASVFCLTCLSFDRYLAIVHSLSSAKLRSRSSIIVSLAVIWLFSGLLALPSLILRDTRVEGNNTICDLDFSGVSSKENENFWIGGLSILTTVPGFLLPLLLMTIFYCFIGGKVTMHFQNLKKEEQKKKRLLKIIITLVVVFAICWLPFHILKTIHFLDLMGFLELSCSTQNIIVSLHPYATCLAYVNSCLNPFLYAFFDLRFRSQCFFFFGFKKVLQGHLSNTSSSLSAQTQKSEIHSLATKV.

At M1 to L37 the chain is on the extracellular side. A glycan (N-linked (GlcNAc...) asparagine) is linked at N19. Disulfide bonds link C26–C286 and C108–C185. The helical transmembrane segment at L38–F58 threads the bilayer. At T59–N76 the chain is on the cytoplasmic side. Residues L77 to L97 traverse the membrane as a helical segment. Over G98 to L110 the chain is Extracellular. Residues S111–F131 traverse the membrane as a helical segment. The Cytoplasmic segment spans residues D132 to S151. Residues I152 to I172 form a helical membrane-spanning segment. Residues L173–N199 are Extracellular-facing. An N-linked (GlcNAc...) asparagine glycan is attached at N181. The helical transmembrane segment at F200–L220 threads the bilayer. Over M221–R248 the chain is Cytoplasmic. Residues L249–I269 form a helical membrane-spanning segment. Residues L270 to H296 are Extracellular-facing. Residues P297 to F317 traverse the membrane as a helical segment. Residues D318–V362 lie on the Cytoplasmic side of the membrane.

It belongs to the G-protein coupled receptor 1 family. As to expression, expressed in all blood vessels including the posterior cardinal vein, intersomitic veins and the vitelline vein network. At the gastrula stage, exclusively expressed in the mesodermal layer and at the neurula stage in the lateral plate mesoderm. Larval expression is observed in the endothelium of the primary blood vessels and the forming heart.

It localises to the cell membrane. Its function is as follows. G protein-coupled receptor for peptide hormones apelin (apln) and apelin receptor early endogenous ligand (apela), that plays a role in the regulation of normal cardiovascular function and fluid homeostasis. When acting as apelin receptor, activates both G(i) protein pathway that inhibits adenylate cyclase activity, and the beta-arrestin pathway that promotes internalization of the receptor. Also functions as mechanoreceptor that is activated by pathological stimuli in a G-protein-independent fashion to induce beta-arrestin signaling, hence eliciting cardiac hypertrophy. However, the presence of apelin ligand blunts cardiac hypertrophic induction from APLNR/APJ on response to pathological stimuli. Plays a key role in early development such as gastrulation, blood vessels formation and heart morphogenesis by acting as a receptor for apela hormone, promoting endoderm and mesendoderm cell migration and regulating the migration of cells fated to become myocardial progenitors, respectively. Promotes angioblast migration toward the embryonic midline, i.e. the position of the future vessel formation, during vasculogenesis. May promote sinus venosus (SV)-derived endothelial cells migration into the developing heart to promote coronary blood vessel development. Required for cardiovascular development, particularly for intersomitic vein angiogenesis by acting as a receptor for apln hormone. Also plays a role in various processes in adults such as regulation of blood vessel formation, blood pressure, heart contractility, and heart failure. Acts upstream of the i/o type of G-alpha proteins in the differentiation of endothelium, erythroid cells, myeloid cells and cardiomyocytes. The protein is Apelin receptor A (aplnr-a) of Xenopus laevis (African clawed frog).